A 341-amino-acid polypeptide reads, in one-letter code: GTPase Obg (341 aa).

Positions 2-160 (SGFIDEVPIQ…FSLILELKLL (159 aa)) constitute an Obg domain. The region spanning 161–330 (ADIGIVGLPN…LLERIDKVFF (170 aa)) is the OBG-type G domain. GTP is bound by residues 167-174 (GLPNAGKS), 192-196 (FTTLS), 215-218 (DIPG), 282-285 (NKMD), and 311-313 (SAD). Mg(2+)-binding residues include serine 174 and threonine 194.

This sequence belongs to the TRAFAC class OBG-HflX-like GTPase superfamily. OBG GTPase family. Monomer. Mg(2+) serves as cofactor.

It is found in the cytoplasm. In terms of biological role, an essential GTPase which binds GTP, GDP and possibly (p)ppGpp with moderate affinity, with high nucleotide exchange rates and a fairly low GTP hydrolysis rate. Plays a role in control of the cell cycle, stress response, ribosome biogenesis and in those bacteria that undergo differentiation, in morphogenesis control. The sequence is that of GTPase Obg from Leptospira biflexa serovar Patoc (strain Patoc 1 / Ames).